A 211-amino-acid chain; its full sequence is MTGTLVLVRHGQSDWNLKNLFTGWRDPDLTDLGVQEANAGGKALKDYGIQFDIAFTSDLSRAQKTCGIILDNLGQSGLETIRDQALNERDYGDLSGLNKDDARAKWGEEQVHIWRRSYDIPPPGGESLRDTGARVWPYYLTEILPRVLRGEKVLVAAHGNSLRSLVMVLDKLTKEQILSVNLATGVPMVYKLNADSTVASKDVLGDMSGAH.

Residues 9–16 (RHGQSDWN), 22–23 (TG), R61, 88–91 (ERDY), K99, 115–116 (RR), and 159–160 (GN) each bind substrate. H10 acts as the Tele-phosphohistidine intermediate in catalysis. Catalysis depends on E88, which acts as the Proton donor/acceptor.

This sequence belongs to the phosphoglycerate mutase family. BPG-dependent PGAM subfamily. As to quaternary structure, homodimer.

The enzyme catalyses (2R)-2-phosphoglycerate = (2R)-3-phosphoglycerate. The protein operates within carbohydrate degradation; glycolysis; pyruvate from D-glyceraldehyde 3-phosphate: step 3/5. Its function is as follows. Catalyzes the interconversion of 2-phosphoglycerate and 3-phosphoglycerate. The sequence is that of 2,3-bisphosphoglycerate-dependent phosphoglycerate mutase from Allorhizobium ampelinum (strain ATCC BAA-846 / DSM 112012 / S4) (Agrobacterium vitis (strain S4)).